The sequence spans 585 residues: uncharacterized protein (585 aa).

The tract at residues 27 to 59 (DDSERSVKSVSVSISDDEDSKTDVQDNMATPST) is disordered.

This is an uncharacterized protein from Saccharomyces cerevisiae (strain ATCC 204508 / S288c) (Baker's yeast).